Here is a 287-residue protein sequence, read N- to C-terminus: tRNA-cytidine(32) 2-sulfurtransferase (287 aa).

The PP-loop motif signature appears at 39-44; it reads SGGKDS. Positions 114, 117, and 205 each coordinate [4Fe-4S] cluster.

Belongs to the TtcA family. As to quaternary structure, homodimer. Mg(2+) is required as a cofactor. Requires [4Fe-4S] cluster as cofactor.

It is found in the cytoplasm. It carries out the reaction cytidine(32) in tRNA + S-sulfanyl-L-cysteinyl-[cysteine desulfurase] + AH2 + ATP = 2-thiocytidine(32) in tRNA + L-cysteinyl-[cysteine desulfurase] + A + AMP + diphosphate + H(+). It participates in tRNA modification. Catalyzes the ATP-dependent 2-thiolation of cytidine in position 32 of tRNA, to form 2-thiocytidine (s(2)C32). The sulfur atoms are provided by the cysteine/cysteine desulfurase (IscS) system. This is tRNA-cytidine(32) 2-sulfurtransferase from Dechloromonas aromatica (strain RCB).